The sequence spans 351 residues: MITLAVDAMGGDQGLAVTVPGATAFLQAHPDVHLIMTGDETQLRQALTAAGAPMERIDICHTAQIVGMDEAPQSALKNKKDSSMRVAVNQVKEGKAQAAVSAGNTGALMATARFVLKTIPGIERPAIAKFLPSDTDHVTLALDLGANVDCTPEQLAQFAVIGSELVHALHPQKGQPRVGLVNVGTEDIKGTDTVKQTYKLLQNSKLNFIGNIESNSILYGEADVVVADGFVGNVMLKTIEGAVKFMSGAIRREFQSNLFNKLAAVAALPALKGLKNKLDPRKFNGAILLGLRGIVIKSHGGTDETGFRYALEEAYHEAKSASLSKIEQGVAEQLAALETAKAVQNENVGGL.

It belongs to the PlsX family. Homodimer. Probably interacts with PlsY.

The protein resides in the cytoplasm. The catalysed reaction is a fatty acyl-[ACP] + phosphate = an acyl phosphate + holo-[ACP]. The protein operates within lipid metabolism; phospholipid metabolism. In terms of biological role, catalyzes the reversible formation of acyl-phosphate (acyl-PO(4)) from acyl-[acyl-carrier-protein] (acyl-ACP). This enzyme utilizes acyl-ACP as fatty acyl donor, but not acyl-CoA. The chain is Phosphate acyltransferase from Neisseria meningitidis serogroup A / serotype 4A (strain DSM 15465 / Z2491).